The following is a 397-amino-acid chain: Odorant receptor 22b (397 aa).

Residues 1–49 (MLSQFFPHIKEKPLSERVKSRDAFVYLDRVMWSFGWTVPENKRWDLHYK) lie on the Cytoplasmic side of the membrane. Residues 50–70 (LWSTFVTLLIFILLPISVSVE) traverse the membrane as a helical segment. Residues 71-85 (YIQRFKTFSAGEFLS) lie on the Extracellular side of the membrane. A helical transmembrane segment spans residues 86–105 (SIQIGVNMYGSSFKSYLTMM). The Cytoplasmic segment spans residues 106–143 (GYKKRQEAKMSLDELDKRCVCDEERTIVHRHVALGNFC). A helical membrane pass occupies residues 144 to 164 (YIFYHIAYTSFLISNFLSFIM). Over 165–194 (KRIHAWRMYFPYVDPEKQFYISSIAEVILR) the chain is Extracellular. Residues 195-215 (GWAVFMDLCTDVCPLISMVIA) traverse the membrane as a helical segment. Residues 216–268 (RCHITLLKQRLRNLRSEPGRTEDEYLKELADCVRDHRLILDYVDALRSVFSGT) lie on the Cytoplasmic side of the membrane. Residues 269–289 (IFVQFLLIGIVLGLSMINIMF) form a helical membrane-spanning segment. The Extracellular portion of the chain corresponds to 290–295 (FSTLST). Residues 296 to 316 (GVAVVLFMSCVSMQTFPFCYL) traverse the membrane as a helical segment. Over 317-347 (CNMIMDDCQEMADSLFQSDWTSADRRYKSTL) the chain is Cytoplasmic. Residues 348 to 368 (VYFLHNLQQPIILTAGGVFPI) form a helical membrane-spanning segment. At 369 to 397 (SMQTNLNMVKLAFTVVTIVKQFNLAEKFQ) the chain is on the extracellular side.

This sequence belongs to the insect chemoreceptor superfamily. Heteromeric odorant receptor channel (TC 1.A.69) family. Or2a subfamily. In terms of assembly, interacts with Orco, via conserved C-terminal cytoplasmic loops. Complexes exist early in the endomembrane system in olfactory sensory neurons (OSNs), coupling these complexes to the conserved ciliary trafficking pathway. Expressed with Orco in 20-22 sensory neurons on the medial-proximal edge of the antenna. This expression pattern matches the distribution of the large sensilla basiconica. Expression is first seen at 60 hours APF in a subset of cells restricted to a subregion of the developing antenna. Expression continues throughout antennal development. Expressed in the ab3A neuron which responds to ethyl butyrate.

The protein localises to the cell membrane. Its function is as follows. Odorant receptor which mediates acceptance or avoidance behavior, depending on its substrates. The odorant receptor repertoire encodes a large collection of odor stimuli that vary widely in identity, intensity, and duration. Involved in the behavioral responses to esters. Complexes with Orco to form odorant-sensing units, providing sensitive and prolonged odorant signaling and calcium permeability. They are necessary and sufficient to promote functional reconstitution of odor-evoked signaling in sensory neurons that normally respond only to carbon dioxide. The sequence is that of Odorant receptor 22b (Or22b) from Drosophila melanogaster (Fruit fly).